Reading from the N-terminus, the 356-residue chain is Alanine racemase, catabolic (356 aa).

Lys-35 acts as the Proton acceptor; specific for D-alanine in catalysis. Lys-35 is subject to N6-(pyridoxal phosphate)lysine. Arg-130 contributes to the substrate binding site. Tyr-253 acts as the Proton acceptor; specific for L-alanine in catalysis. Met-301 lines the substrate pocket.

The protein belongs to the alanine racemase family. In terms of assembly, monomer. Pyridoxal 5'-phosphate serves as cofactor.

It carries out the reaction L-alanine = D-alanine. With respect to regulation, inactivated by D- and L-beta-fluoroalanine, D- and L-beta-chloroalanine, and O-acetyl-D-serine. In terms of biological role, isomerizes L-alanine to D-alanine which is then oxidized to pyruvate by DadA. In Salmonella typhimurium (strain LT2 / SGSC1412 / ATCC 700720), this protein is Alanine racemase, catabolic (dadX).